The primary structure comprises 510 residues: Probable cytosol aminopeptidase (510 aa).

Mn(2+) is bound by residues Lys-272 and Asp-277. The active site involves Lys-284. Residues Asp-296, Asp-355, and Glu-357 each coordinate Mn(2+). The active site involves Arg-359.

This sequence belongs to the peptidase M17 family. Mn(2+) is required as a cofactor.

The protein localises to the cytoplasm. It catalyses the reaction Release of an N-terminal amino acid, Xaa-|-Yaa-, in which Xaa is preferably Leu, but may be other amino acids including Pro although not Arg or Lys, and Yaa may be Pro. Amino acid amides and methyl esters are also readily hydrolyzed, but rates on arylamides are exceedingly low.. The enzyme catalyses Release of an N-terminal amino acid, preferentially leucine, but not glutamic or aspartic acids.. In terms of biological role, presumably involved in the processing and regular turnover of intracellular proteins. Catalyzes the removal of unsubstituted N-terminal amino acids from various peptides. The protein is Probable cytosol aminopeptidase of Synechococcus sp. (strain JA-3-3Ab) (Cyanobacteria bacterium Yellowstone A-Prime).